Reading from the N-terminus, the 55-residue chain is Large ribosomal subunit protein bL33 (55 aa).

The protein belongs to the bacterial ribosomal protein bL33 family.

The sequence is that of Large ribosomal subunit protein bL33 from Rhodopseudomonas palustris (strain BisB18).